Reading from the N-terminus, the 25-residue chain is TKIADLRSQTTDQLSDELLKLXKEQ.

Belongs to the universal ribosomal protein uL29 family.

This chain is Large ribosomal subunit protein uL29 (rpmC), found in Brevundimonas vesicularis (Pseudomonas vesicularis).